The primary structure comprises 494 residues: Glutamate decarboxylase 5 (494 aa).

Lysine 276 is subject to N6-(pyridoxal phosphate)lysine.

This sequence belongs to the group II decarboxylase family. As to quaternary structure, homohexamer. Interacts with calmodulin. It depends on pyridoxal 5'-phosphate as a cofactor. Expressed in flowers.

The catalysed reaction is L-glutamate + H(+) = 4-aminobutanoate + CO2. Functionally, catalyzes the production of GABA. The calmodulin-binding is calcium-dependent and it is proposed that this may, directly or indirectly, form a calcium regulated control of GABA biosynthesis. The protein is Glutamate decarboxylase 5 (GAD5) of Arabidopsis thaliana (Mouse-ear cress).